The chain runs to 156 residues: ATP synthase subunit b (156 aa).

A helical membrane pass occupies residues 7-26 (ILGQAIAFVLFVWFCMKYVW).

The protein belongs to the ATPase B chain family. As to quaternary structure, F-type ATPases have 2 components, F(1) - the catalytic core - and F(0) - the membrane proton channel. F(1) has five subunits: alpha(3), beta(3), gamma(1), delta(1), epsilon(1). F(0) has three main subunits: a(1), b(2) and c(10-14). The alpha and beta chains form an alternating ring which encloses part of the gamma chain. F(1) is attached to F(0) by a central stalk formed by the gamma and epsilon chains, while a peripheral stalk is formed by the delta and b chains.

It is found in the cell inner membrane. Functionally, f(1)F(0) ATP synthase produces ATP from ADP in the presence of a proton or sodium gradient. F-type ATPases consist of two structural domains, F(1) containing the extramembraneous catalytic core and F(0) containing the membrane proton channel, linked together by a central stalk and a peripheral stalk. During catalysis, ATP synthesis in the catalytic domain of F(1) is coupled via a rotary mechanism of the central stalk subunits to proton translocation. Its function is as follows. Component of the F(0) channel, it forms part of the peripheral stalk, linking F(1) to F(0). The chain is ATP synthase subunit b from Pectobacterium atrosepticum (strain SCRI 1043 / ATCC BAA-672) (Erwinia carotovora subsp. atroseptica).